The sequence spans 374 residues: AA14 family lytic polysaccharide monooxygenase B (374 aa).

The signal sequence occupies residues 1–18 (MIPVFLAAIAVFLPLTSG). 4 N-linked (GlcNAc...) asparagine glycosylation sites follow: asparagine 31, asparagine 49, asparagine 94, and asparagine 151. 5 cysteine pairs are disulfide-bonded: cysteine 85-cysteine 108, cysteine 127-cysteine 154, cysteine 171-cysteine 176, cysteine 178-cysteine 200, and cysteine 220-cysteine 236. N-linked (GlcNAc...) asparagine glycans are attached at residues asparagine 235 and asparagine 315. The interval 306-374 (ISNATPAPSN…TQSRKMRYVF (69 aa)) is disordered. Low complexity predominate over residues 313–344 (PSNGSCSSRPPSSPVSSSAASTTTSRSPRPSA).

Belongs to the polysaccharide monooxygenase AA14 family. The cofactor is Cu(2+).

The protein localises to the secreted. Its function is as follows. Lytic polysaccharide monooxygenase (LPMO) that oxidatively cleaves xylan with both C1 and C4 regioselectivity and that specifically targets the protective shield made by heteroxylans that cover cellulose microfibrils in wood. Catalysis by LPMOs requires the reduction of the active-site copper from Cu(II) to Cu(I) by a reducing agent and H(2)O(2) or O(2) as a cosubstrate. Cleavage occurs only when xylans are bound to cellulose and not when they are in solution. Increases the efficiency of wood saccharification through oxidative cleavage of highly refractory xylan-coated cellulose fibers via synergistic relationship with xylan-active enzymes, xylobiohydrolases and cellobiohydrolases. This chain is AA14 family lytic polysaccharide monooxygenase B, found in Pycnoporus cinnabarinus (Cinnabar-red polypore).